A 456-amino-acid polypeptide reads, in one-letter code: UDP-N-acetylmuramate--L-alanine ligase (456 aa).

114-120 (GTHGKTT) serves as a coordination point for ATP.

The protein belongs to the MurCDEF family.

The protein localises to the cytoplasm. It catalyses the reaction UDP-N-acetyl-alpha-D-muramate + L-alanine + ATP = UDP-N-acetyl-alpha-D-muramoyl-L-alanine + ADP + phosphate + H(+). Its pathway is cell wall biogenesis; peptidoglycan biosynthesis. Functionally, cell wall formation. This chain is UDP-N-acetylmuramate--L-alanine ligase, found in Porphyromonas gingivalis (strain ATCC 33277 / DSM 20709 / CIP 103683 / JCM 12257 / NCTC 11834 / 2561).